A 497-amino-acid chain; its full sequence is Glutamyl-tRNA(Gln) amidotransferase subunit A (497 aa).

Catalysis depends on charge relay system residues lysine 75 and serine 150. Serine 174 (acyl-ester intermediate) is an active-site residue.

The protein belongs to the amidase family. GatA subfamily. In terms of assembly, heterotrimer of A, B and C subunits.

The catalysed reaction is L-glutamyl-tRNA(Gln) + L-glutamine + ATP + H2O = L-glutaminyl-tRNA(Gln) + L-glutamate + ADP + phosphate + H(+). Allows the formation of correctly charged Gln-tRNA(Gln) through the transamidation of misacylated Glu-tRNA(Gln) in organisms which lack glutaminyl-tRNA synthetase. The reaction takes place in the presence of glutamine and ATP through an activated gamma-phospho-Glu-tRNA(Gln). The polypeptide is Glutamyl-tRNA(Gln) amidotransferase subunit A (Paraburkholderia phymatum (strain DSM 17167 / CIP 108236 / LMG 21445 / STM815) (Burkholderia phymatum)).